An 89-amino-acid polypeptide reads, in one-letter code: Omega-theraphotoxin-Ba1c (89 aa).

Positions 1-23 are cleaved as a signal peptide; sequence MRSLTLAAVLACSLLLVFHTSAA. Positions 24–50 are excised as a propeptide; that stretch reads EEHEAQEGYLMNPGDTDTALATVDDER. 3 disulfides stabilise this stretch: cysteine 54–cysteine 75, cysteine 58–cysteine 81, and cysteine 67–cysteine 86.

It belongs to the neurotoxin 12 (Hwtx-2) family. 06 (TXP1) subfamily. In terms of tissue distribution, expressed by the venom gland.

The protein localises to the secreted. Inhibits voltage-gated calcium channels (Cav) in rat cerebellar granule cells. Has insecticidal activity. This is Omega-theraphotoxin-Ba1c from Brachypelma albiceps (Mexican golden redrump tarantula).